The primary structure comprises 260 residues: Indole-3-glycerol phosphate synthase (260 aa).

This sequence belongs to the TrpC family.

It carries out the reaction 1-(2-carboxyphenylamino)-1-deoxy-D-ribulose 5-phosphate + H(+) = (1S,2R)-1-C-(indol-3-yl)glycerol 3-phosphate + CO2 + H2O. It functions in the pathway amino-acid biosynthesis; L-tryptophan biosynthesis; L-tryptophan from chorismate: step 4/5. The protein is Indole-3-glycerol phosphate synthase of Ruminiclostridium cellulolyticum (strain ATCC 35319 / DSM 5812 / JCM 6584 / H10) (Clostridium cellulolyticum).